The chain runs to 245 residues: tRNA pseudouridine synthase A (245 aa).

The active-site Nucleophile is the Asp52. Tyr110 is a binding site for substrate.

It belongs to the tRNA pseudouridine synthase TruA family. As to quaternary structure, homodimer.

It carries out the reaction uridine(38/39/40) in tRNA = pseudouridine(38/39/40) in tRNA. Functionally, formation of pseudouridine at positions 38, 39 and 40 in the anticodon stem and loop of transfer RNAs. In Pseudothermotoga lettingae (strain ATCC BAA-301 / DSM 14385 / NBRC 107922 / TMO) (Thermotoga lettingae), this protein is tRNA pseudouridine synthase A.